We begin with the raw amino-acid sequence, 249 residues long: 2,3-bisphosphoglycerate-dependent phosphoglycerate mutase (249 aa).

Residues 8–15 (RHGESAWN), 21–22 (TG), arginine 60, 87–90 (ERHY), lysine 98, 114–115 (RR), and 183–184 (GN) each bind substrate. Histidine 9 (tele-phosphohistidine intermediate) is an active-site residue. Glutamate 87 serves as the catalytic Proton donor/acceptor.

The protein belongs to the phosphoglycerate mutase family. BPG-dependent PGAM subfamily.

It catalyses the reaction (2R)-2-phosphoglycerate = (2R)-3-phosphoglycerate. It participates in carbohydrate degradation; glycolysis; pyruvate from D-glyceraldehyde 3-phosphate: step 3/5. In terms of biological role, catalyzes the interconversion of 2-phosphoglycerate and 3-phosphoglycerate. This is 2,3-bisphosphoglycerate-dependent phosphoglycerate mutase from Methanosphaerula palustris (strain ATCC BAA-1556 / DSM 19958 / E1-9c).